The sequence spans 157 residues: Arginine regulator (157 aa).

This sequence belongs to the ArgR family.

The protein localises to the cytoplasm. It participates in amino-acid degradation; L-arginine degradation via ADI pathway. Regulates the transcription of the arc operon, involved in arginine catabolism. The sequence is that of Arginine regulator (argR1) from Streptococcus pyogenes serotype M3 (strain ATCC BAA-595 / MGAS315).